A 276-amino-acid chain; its full sequence is Undecaprenyl-diphosphatase (276 aa).

Transmembrane regions (helical) follow at residues methionine 1 to valine 21, alanine 39 to phenylalanine 59, tyrosine 84 to phenylalanine 104, leucine 115 to alanine 135, leucine 159 to glycine 179, phenylalanine 190 to alanine 210, glutamine 222 to leucine 242, and phenylalanine 253 to valine 273.

The protein belongs to the UppP family.

The protein localises to the cell membrane. It catalyses the reaction di-trans,octa-cis-undecaprenyl diphosphate + H2O = di-trans,octa-cis-undecaprenyl phosphate + phosphate + H(+). In terms of biological role, catalyzes the dephosphorylation of undecaprenyl diphosphate (UPP). Confers resistance to bacitracin. This is Undecaprenyl-diphosphatase from Mycolicibacterium gilvum (strain PYR-GCK) (Mycobacterium gilvum (strain PYR-GCK)).